A 207-amino-acid chain; its full sequence is Small ribosomal subunit protein uS4 (207 aa).

In terms of domain architecture, S4 RNA-binding spans 96-156; it reads RRLDNVVYRL…EKFKTSSFIA (61 aa).

This sequence belongs to the universal ribosomal protein uS4 family. In terms of assembly, part of the 30S ribosomal subunit. Contacts protein S5. The interaction surface between S4 and S5 is involved in control of translational fidelity.

Functionally, one of the primary rRNA binding proteins, it binds directly to 16S rRNA where it nucleates assembly of the body of the 30S subunit. Its function is as follows. With S5 and S12 plays an important role in translational accuracy. The polypeptide is Small ribosomal subunit protein uS4 (Leptospira interrogans serogroup Icterohaemorrhagiae serovar copenhageni (strain Fiocruz L1-130)).